Here is a 231-residue protein sequence, read N- to C-terminus: MKRAVVVFSGGQDSTTCLVQALQQYDEVHCVTFDYGQRHRAEIDVARELALKLGARAHKVLDVTLLNELAVSSLTRDSIPVPDYEPEADGIPNTFVPGRNILFLTLAAIYAYQVKAEAVITGVCETDFSGYPDCRDEFVKALNHAVSLGMAKDIRFETPLMWIDKAETWALADYYGKLDLVRNETLTCYNGIKGDGCSHCAACNLRANGLNHYLADKPTVMAAMKQKTGLR.

Residue 8-18 (FSGGQDSTTCL) participates in ATP binding. 4 residues coordinate Zn(2+): C188, C197, C200, and C203.

It belongs to the QueC family. Requires Zn(2+) as cofactor.

It carries out the reaction 7-carboxy-7-deazaguanine + NH4(+) + ATP = 7-cyano-7-deazaguanine + ADP + phosphate + H2O + H(+). The protein operates within purine metabolism; 7-cyano-7-deazaguanine biosynthesis. In terms of biological role, catalyzes the ATP-dependent conversion of 7-carboxy-7-deazaguanine (CDG) to 7-cyano-7-deazaguanine (preQ(0)). In Escherichia coli (strain ATCC 8739 / DSM 1576 / NBRC 3972 / NCIMB 8545 / WDCM 00012 / Crooks), this protein is 7-cyano-7-deazaguanine synthase.